A 225-amino-acid polypeptide reads, in one-letter code: Thymidine kinase (225 aa).

An ATP-binding site is contributed by Gly15 to Thr22. Residues Lys85–Ser110 form a disordered region. Positions Arg90–Pro104 are enriched in polar residues. ATP is bound at residue Asp121–Asn124. Glu122 serves as the catalytic Proton acceptor. Zn(2+) is bound by residues Cys178, Cys181, Cys216, and Cys219.

The protein belongs to the thymidine kinase family. Homotetramer.

The protein localises to the cytoplasm. The enzyme catalyses thymidine + ATP = dTMP + ADP + H(+). In Haloquadratum walsbyi (strain DSM 16790 / HBSQ001), this protein is Thymidine kinase.